The primary structure comprises 75 residues: DNA-directed RNA polymerase subunit epsilon (75 aa).

This sequence belongs to the RNA polymerase subunit epsilon family. RNAP is composed of a core of 2 alpha, a beta and a beta' subunit. The core is associated with a delta subunit, and at least one of epsilon or omega. When a sigma factor is associated with the core the holoenzyme is formed, which can initiate transcription.

It carries out the reaction RNA(n) + a ribonucleoside 5'-triphosphate = RNA(n+1) + diphosphate. Functionally, a non-essential component of RNA polymerase (RNAP). The sequence is that of DNA-directed RNA polymerase subunit epsilon from Lactobacillus gasseri (strain ATCC 33323 / DSM 20243 / BCRC 14619 / CIP 102991 / JCM 1131 / KCTC 3163 / NCIMB 11718 / NCTC 13722 / AM63).